Reading from the N-terminus, the 227-residue chain is Ion-translocating oxidoreductase complex subunit E (227 aa).

The next 5 helical transmembrane spans lie at 57–77 (LGLG…ISLF), 89–109 (IYVM…NAFA), 111–131 (PVYQ…IVIG), 146–166 (AFDG…LGAI), and 200–220 (GLLL…ILAV).

The protein belongs to the NqrDE/RnfAE family. The complex is composed of six subunits: RnfA, RnfB, RnfC, RnfD, RnfE and RnfG.

The protein localises to the cell inner membrane. Its function is as follows. Part of a membrane-bound complex that couples electron transfer with translocation of ions across the membrane. This Haemophilus ducreyi (strain 35000HP / ATCC 700724) protein is Ion-translocating oxidoreductase complex subunit E.